A 361-amino-acid polypeptide reads, in one-letter code: MKAGINQIQSYVPEEPVQRVKSKYHLKRLARLSANENPYGTSPLVKEALINAINDGALNRYPDGDASELRALVGQQLNVAGDQLVFGVGLDEIIELVARAFLTPDDQVVVAKPAFSEYALHATVEGAAVKEVPVNPATGHFDFAGALAVINEATRLVWICNPNNPTGVLESPQAIEDFVRQVPKDTLVFIDEAYLDFADDPAKATCLPLVKRYQNVAVLRTLSKAYGLANVRVGFAVMPVALAAILQKIRLPYNLNTLAQVAAVAALRDQDFVKEAAAKNTVERAKWEDFFDQQGVKYFKSQANFIYFTVKNAADLAQTLLEKGFQVRRHLQPDWLRLTIGPAEDTTVMQALVADWLKQQA.

The residue at position 224 (Lys-224) is an N6-(pyridoxal phosphate)lysine.

The protein belongs to the class-II pyridoxal-phosphate-dependent aminotransferase family. Histidinol-phosphate aminotransferase subfamily. Homodimer. It depends on pyridoxal 5'-phosphate as a cofactor.

The catalysed reaction is L-histidinol phosphate + 2-oxoglutarate = 3-(imidazol-4-yl)-2-oxopropyl phosphate + L-glutamate. Its pathway is amino-acid biosynthesis; L-histidine biosynthesis; L-histidine from 5-phospho-alpha-D-ribose 1-diphosphate: step 7/9. The sequence is that of Histidinol-phosphate aminotransferase from Limosilactobacillus fermentum (strain NBRC 3956 / LMG 18251) (Lactobacillus fermentum).